We begin with the raw amino-acid sequence, 257 residues long: 5'-nucleotidase SurE (257 aa).

Asp11, Asp12, Ser42, and Asn99 together coordinate a divalent metal cation.

This sequence belongs to the SurE nucleotidase family. The cofactor is a divalent metal cation.

The protein resides in the cytoplasm. It carries out the reaction a ribonucleoside 5'-phosphate + H2O = a ribonucleoside + phosphate. Functionally, nucleotidase that shows phosphatase activity on nucleoside 5'-monophosphates. This chain is 5'-nucleotidase SurE, found in Flavobacterium psychrophilum (strain ATCC 49511 / DSM 21280 / CIP 103535 / JIP02/86).